The chain runs to 310 residues: Probable manganese-dependent inorganic pyrophosphatase (310 aa).

Positions 9, 13, 15, 76, 98, and 150 each coordinate Mn(2+).

It belongs to the PPase class C family. In terms of assembly, homodimer. The cofactor is Mn(2+).

It is found in the cytoplasm. The catalysed reaction is diphosphate + H2O = 2 phosphate + H(+). In Streptococcus mutans serotype c (strain ATCC 700610 / UA159), this protein is Probable manganese-dependent inorganic pyrophosphatase (ppaC).